The chain runs to 436 residues: GTPase Der (436 aa).

EngA-type G domains are found at residues 4–167 and 175–351; these read PTVA…PTEV and IRFS…ESQN. Residues 10–17, 57–61, 119–122, 181–188, 229–233, and 294–297 each bind GTP; these read GRPNVGKS, DTGGI, NKVD, DTAGM, and NKWD. Positions 352–436 constitute a KH-like domain; that stretch reads RRISSAVLND…PIHLIARKRK (85 aa).

It belongs to the TRAFAC class TrmE-Era-EngA-EngB-Septin-like GTPase superfamily. EngA (Der) GTPase family. In terms of assembly, associates with the 50S ribosomal subunit.

GTPase that plays an essential role in the late steps of ribosome biogenesis. The sequence is that of GTPase Der from Streptococcus thermophilus (strain CNRZ 1066).